The sequence spans 409 residues: uncharacterized protein (409 aa).

The next 10 membrane-spanning stretches (helical) occupy residues F62 to I82, L100 to F120, M123 to L143, A152 to I172, V183 to V203, G252 to F272, A293 to V313, Y328 to M348, V355 to P375, and F376 to W396.

The protein resides in the cell membrane. This is an uncharacterized protein from Rhizobium meliloti (strain 1021) (Ensifer meliloti).